The sequence spans 165 residues: Thiol peroxidase (165 aa).

The Thioredoxin domain occupies proline 18–leucine 165. Cysteine 60 (cysteine sulfenic acid (-SOH) intermediate) is an active-site residue. An intrachain disulfide couples cysteine 60 to cysteine 94.

The protein belongs to the peroxiredoxin family. Tpx subfamily. In terms of assembly, homodimer.

The enzyme catalyses a hydroperoxide + [thioredoxin]-dithiol = an alcohol + [thioredoxin]-disulfide + H2O. In terms of biological role, thiol-specific peroxidase that catalyzes the reduction of hydrogen peroxide and organic hydroperoxides to water and alcohols, respectively. Plays a role in cell protection against oxidative stress by detoxifying peroxides. The protein is Thiol peroxidase of Pseudomonas aeruginosa (strain ATCC 15692 / DSM 22644 / CIP 104116 / JCM 14847 / LMG 12228 / 1C / PRS 101 / PAO1).